A 592-amino-acid chain; its full sequence is Membrane protein insertase YidC (592 aa).

Transmembrane regions (helical) follow at residues 8 to 28 (LFIALGLILVILTGYQMFVMG), 363 to 385 (ALGQFGLAILALTLMVKIVMFPL), 430 to 450 (INPLAGCLPILPQIPIFFALY), 493 to 513 (IWLIGGVLGIGAWPIIMGLTM), and 531 to 551 (IFAFLPIVFTFILAPFAAGLV).

This sequence belongs to the OXA1/ALB3/YidC family. Type 1 subfamily. In terms of assembly, interacts with the Sec translocase complex via SecD. Specifically interacts with transmembrane segments of nascent integral membrane proteins during membrane integration.

The protein resides in the cell inner membrane. In terms of biological role, required for the insertion and/or proper folding and/or complex formation of integral membrane proteins into the membrane. Involved in integration of membrane proteins that insert both dependently and independently of the Sec translocase complex, as well as at least some lipoproteins. Aids folding of multispanning membrane proteins. This chain is Membrane protein insertase YidC, found in Maricaulis maris (strain MCS10) (Caulobacter maris).